The primary structure comprises 467 residues: Uronate isomerase (467 aa).

It belongs to the metallo-dependent hydrolases superfamily. Uronate isomerase family.

It carries out the reaction D-glucuronate = D-fructuronate. The enzyme catalyses aldehydo-D-galacturonate = keto-D-tagaturonate. The protein operates within carbohydrate metabolism; pentose and glucuronate interconversion. In Flavobacterium johnsoniae (strain ATCC 17061 / DSM 2064 / JCM 8514 / BCRC 14874 / CCUG 350202 / NBRC 14942 / NCIMB 11054 / UW101) (Cytophaga johnsonae), this protein is Uronate isomerase.